The following is a 332-amino-acid chain: MSKARVYADVNVLRPKEYWDYEALTVQWGEQDDYEVVRKVGRGKYSEVFEGINVNNNEKCIIKILKPVKKKKIKREIKILQNLCGGPNIVKLLDIVRDQHSKTPSLIFEYVNNTDFKVLYPTLTDYDIRYYIYELLKALDYCHSQGIMHRDVKPHNVMIDHELRKLRLIDWGLAEFYHPGKEYNVRVASRYFKGPELLVDLQDYDYSLDMWSLGCMFAGMIFRKEPFFYGHDNHDQLVKIAKVLGTDGLNVYLNKYRIELDPQLEALVGRHSRKPWLKFMNADNQHLVSPEAIDFLDKLLRYDHQERLTALEAMTHPYFQQVRAAENSRTRA.

One can recognise a Protein kinase domain in the interval 34-319; it reads YEVVRKVGRG…ALEAMTHPYF (286 aa). Residues 40–48 and Lys-63 contribute to the ATP site; that span reads VGRGKYSEV. Asp-151 acts as the Proton acceptor in catalysis.

Belongs to the protein kinase superfamily. Ser/Thr protein kinase family. CK2 subfamily. As to quaternary structure, tetramer of two alpha and two beta chains (possible).

The catalysed reaction is L-seryl-[protein] + ATP = O-phospho-L-seryl-[protein] + ADP + H(+). It catalyses the reaction L-threonyl-[protein] + ATP = O-phospho-L-threonyl-[protein] + ADP + H(+). Casein kinases are operationally defined by their preferential utilization of acidic proteins such as caseins as substrates. The alpha chain contains the catalytic site. The polypeptide is Casein kinase II subunit alpha (ACK2) (Zea mays (Maize)).